Reading from the N-terminus, the 195-residue chain is DnaJ homolog subfamily C member 5 (195 aa).

Positions 13 to 82 (GDSLYIVLGL…RNIYDKYGSL (70 aa)) constitute a J domain. A disordered region spans residues 162 to 195 (DMEKEGDGAIVVQPTSATETTQLTSDSHPSYHTE). Polar residues predominate over residues 174–189 (QPTSATETTQLTSDSH).

In terms of processing, palmitoylated. Palmitoylation occurs probably in the cysteine-rich domain and regulates DNAJC5 stable membrane attachment.

Its subcellular location is the cytoplasm. The protein localises to the cytosol. The protein resides in the membrane. It localises to the cytoplasmic vesicle. It is found in the secretory vesicle. Its subcellular location is the chromaffin granule membrane. The protein localises to the melanosome. The protein resides in the cell membrane. Functionally, may have an important role in presynaptic function. May be involved in calcium-dependent neurotransmitter release at nerve endings. The polypeptide is DnaJ homolog subfamily C member 5 (Tetronarce californica (Pacific electric ray)).